Reading from the N-terminus, the 103-residue chain is Small ribosomal subunit protein uS10 (103 aa).

Belongs to the universal ribosomal protein uS10 family. In terms of assembly, part of the 30S ribosomal subunit.

Involved in the binding of tRNA to the ribosomes. This Novosphingobium aromaticivorans (strain ATCC 700278 / DSM 12444 / CCUG 56034 / CIP 105152 / NBRC 16084 / F199) protein is Small ribosomal subunit protein uS10.